Reading from the N-terminus, the 362-residue chain is Phosphoserine aminotransferase (362 aa).

Positions 9 and 42 each coordinate L-glutamate. Pyridoxal 5'-phosphate-binding positions include 76–77 (GR), Trp102, Thr153, Asp174, and Gln197. N6-(pyridoxal phosphate)lysine is present on Lys198. A pyridoxal 5'-phosphate-binding site is contributed by 239–240 (NT).

This sequence belongs to the class-V pyridoxal-phosphate-dependent aminotransferase family. SerC subfamily. Homodimer. The cofactor is pyridoxal 5'-phosphate.

It is found in the cytoplasm. It carries out the reaction O-phospho-L-serine + 2-oxoglutarate = 3-phosphooxypyruvate + L-glutamate. It catalyses the reaction 4-(phosphooxy)-L-threonine + 2-oxoglutarate = (R)-3-hydroxy-2-oxo-4-phosphooxybutanoate + L-glutamate. Its pathway is amino-acid biosynthesis; L-serine biosynthesis; L-serine from 3-phospho-D-glycerate: step 2/3. The protein operates within cofactor biosynthesis; pyridoxine 5'-phosphate biosynthesis; pyridoxine 5'-phosphate from D-erythrose 4-phosphate: step 3/5. Catalyzes the reversible conversion of 3-phosphohydroxypyruvate to phosphoserine and of 3-hydroxy-2-oxo-4-phosphonooxybutanoate to phosphohydroxythreonine. This is Phosphoserine aminotransferase from Escherichia coli O139:H28 (strain E24377A / ETEC).